The sequence spans 435 residues: Maltodextrin transport system permease protein MdxF (435 aa).

Transmembrane regions (helical) follow at residues 35-55, 73-93, 136-156, 199-219, 234-254, 293-313, 337-357, and 403-423; these read LLFL…GIQA, FMLI…MFYI, AYIM…FVAL, VIWT…TALF, IFLF…SNMF, LIMI…TGVL, HITF…QYTF, and VAAA…LIAF. The ABC transmembrane type-1 domain maps to 195–422; sequence LGWTVIWTIC…FIVIGISLIA (228 aa).

Belongs to the binding-protein-dependent transport system permease family. MalFG subfamily. As to quaternary structure, the complex is composed of two ATP-binding proteins (MsmX), two transmembrane proteins (MdxF and MdxG) and a solute-binding protein (MdxE).

The protein localises to the cell membrane. Part of the ABC transporter complex involved in maltodextrin import. Probably responsible for the translocation of the substrate across the membrane. In Bacillus subtilis (strain 168), this protein is Maltodextrin transport system permease protein MdxF (mdxF).